A 58-amino-acid chain; its full sequence is Small ribosomal subunit protein bS21 (58 aa).

It belongs to the bacterial ribosomal protein bS21 family.

The polypeptide is Small ribosomal subunit protein bS21 (Staphylococcus saprophyticus subsp. saprophyticus (strain ATCC 15305 / DSM 20229 / NCIMB 8711 / NCTC 7292 / S-41)).